Consider the following 456-residue polypeptide: Phosphomethylpyrimidine synthase (456 aa).

Residues asparagine 80, methionine 109, tyrosine 139, histidine 175, 195 to 197, 236 to 239, and glutamate 275 each bind substrate; these read SRG and DSLR. Histidine 279 provides a ligand contact to Zn(2+). Tyrosine 302 lines the substrate pocket. Histidine 343 provides a ligand contact to Zn(2+). [4Fe-4S] cluster-binding residues include cysteine 423, cysteine 426, and cysteine 431.

It belongs to the ThiC family. It depends on [4Fe-4S] cluster as a cofactor.

The enzyme catalyses 5-amino-1-(5-phospho-beta-D-ribosyl)imidazole + S-adenosyl-L-methionine = 4-amino-2-methyl-5-(phosphooxymethyl)pyrimidine + CO + 5'-deoxyadenosine + formate + L-methionine + 3 H(+). Its pathway is cofactor biosynthesis; thiamine diphosphate biosynthesis. In terms of biological role, catalyzes the synthesis of the hydroxymethylpyrimidine phosphate (HMP-P) moiety of thiamine from aminoimidazole ribotide (AIR) in a radical S-adenosyl-L-methionine (SAM)-dependent reaction. In Prochlorococcus marinus (strain AS9601), this protein is Phosphomethylpyrimidine synthase.